We begin with the raw amino-acid sequence, 174 residues long: Adenine phosphoribosyltransferase (174 aa).

Belongs to the purine/pyrimidine phosphoribosyltransferase family. In terms of assembly, homodimer.

The protein resides in the cytoplasm. It catalyses the reaction AMP + diphosphate = 5-phospho-alpha-D-ribose 1-diphosphate + adenine. Its pathway is purine metabolism; AMP biosynthesis via salvage pathway; AMP from adenine: step 1/1. Catalyzes a salvage reaction resulting in the formation of AMP, that is energically less costly than de novo synthesis. The protein is Adenine phosphoribosyltransferase of Phocaeicola vulgatus (strain ATCC 8482 / DSM 1447 / JCM 5826 / CCUG 4940 / NBRC 14291 / NCTC 11154) (Bacteroides vulgatus).